The sequence spans 59 residues: Large ribosomal subunit protein bL32c (59 aa).

The interval 36-59 is disordered; it reads KSRSFSGVSEHPKPKGFSRQQTNK.

It belongs to the bacterial ribosomal protein bL32 family.

The protein localises to the plastid. It is found in the chloroplast. In Oryza nivara (Indian wild rice), this protein is Large ribosomal subunit protein bL32c.